The chain runs to 342 residues: Probable dual-specificity RNA methyltransferase RlmN (342 aa).

Glu91 (proton acceptor) is an active-site residue. The Radical SAM core domain maps to 97–326 (YKFGNTACVS…CTVRRELGSD (230 aa)). An intrachain disulfide couples Cys104 to Cys331. Residues Cys111, Cys115, and Cys118 each contribute to the [4Fe-4S] cluster site. S-adenosyl-L-methionine-binding positions include 157–158 (GE), Ser189, 212–214 (SLH), and Asn288. The S-methylcysteine intermediate role is filled by Cys331.

Belongs to the radical SAM superfamily. RlmN family. It depends on [4Fe-4S] cluster as a cofactor.

The protein localises to the cytoplasm. It carries out the reaction adenosine(2503) in 23S rRNA + 2 reduced [2Fe-2S]-[ferredoxin] + 2 S-adenosyl-L-methionine = 2-methyladenosine(2503) in 23S rRNA + 5'-deoxyadenosine + L-methionine + 2 oxidized [2Fe-2S]-[ferredoxin] + S-adenosyl-L-homocysteine. The enzyme catalyses adenosine(37) in tRNA + 2 reduced [2Fe-2S]-[ferredoxin] + 2 S-adenosyl-L-methionine = 2-methyladenosine(37) in tRNA + 5'-deoxyadenosine + L-methionine + 2 oxidized [2Fe-2S]-[ferredoxin] + S-adenosyl-L-homocysteine. In terms of biological role, specifically methylates position 2 of adenine 2503 in 23S rRNA and position 2 of adenine 37 in tRNAs. The polypeptide is Probable dual-specificity RNA methyltransferase RlmN (Caldanaerobacter subterraneus subsp. tengcongensis (strain DSM 15242 / JCM 11007 / NBRC 100824 / MB4) (Thermoanaerobacter tengcongensis)).